The following is a 530-amino-acid chain: Dual specificity calcium/calmodulin-dependent 3',5'-cyclic nucleotide phosphodiesterase 1A (530 aa).

Calmodulin-binding stretches follow at residues 24-44 and 114-137; these read TEKM…QLEK and EKPR…MYRK. A PDEase domain is found at 142-508; it reads VGLAYPEAVI…ERWKELAAQG (367 aa). His-219 (proton donor) is an active-site residue. Zn(2+) contacts are provided by His-223, His-259, Asp-260, and Asp-366. Asp-260 is a Mg(2+) binding site. Disordered stretches follow at residues 450–471 and 502–530; these read TKTP…NDGT and KELA…ETHS. A compositionally biased stretch (polar residues) spans 451-471; sequence KTPSYGASRRSNMKGTTNDGT. Basic and acidic residues predominate over residues 510–530; it reads PDPHKNSDLVNAEEKHAETHS.

The protein belongs to the cyclic nucleotide phosphodiesterase family. PDE1 subfamily. As to quaternary structure, homodimer. Interacts with YWHAZ. It depends on Zn(2+) as a cofactor. Requires Mg(2+) as cofactor.

The enzyme catalyses a nucleoside 3',5'-cyclic phosphate + H2O = a nucleoside 5'-phosphate + H(+). The catalysed reaction is 3',5'-cyclic GMP + H2O = GMP + H(+). It carries out the reaction 3',5'-cyclic AMP + H2O = AMP + H(+). Type I PDE are activated by the binding of calmodulin in the presence of Ca(2+). Its function is as follows. Calcium/calmodulin-dependent cyclic nucleotide phosphodiesterase with a dual specificity for the second messengers cGMP and cAMP, which are key regulators of many important physiological processes. Has a higher efficiency with cGMP compared to cAMP. In Bos taurus (Bovine), this protein is Dual specificity calcium/calmodulin-dependent 3',5'-cyclic nucleotide phosphodiesterase 1A.